Reading from the N-terminus, the 513-residue chain is 2,3-bisphosphoglycerate-independent phosphoglycerate mutase (513 aa).

Residues Asp-12 and Ser-62 each coordinate Mn(2+). Ser-62 functions as the Phosphoserine intermediate in the catalytic mechanism. Substrate is bound by residues His-123, 153–154, Arg-185, Arg-191, 260–263, and Lys-333; these read RD and RPDR. Mn(2+) contacts are provided by Asp-400, His-404, Asp-441, His-442, and His-460.

This sequence belongs to the BPG-independent phosphoglycerate mutase family. In terms of assembly, monomer. Requires Mn(2+) as cofactor.

The catalysed reaction is (2R)-2-phosphoglycerate = (2R)-3-phosphoglycerate. It participates in carbohydrate degradation; glycolysis; pyruvate from D-glyceraldehyde 3-phosphate: step 3/5. In terms of biological role, catalyzes the interconversion of 2-phosphoglycerate and 3-phosphoglycerate. The chain is 2,3-bisphosphoglycerate-independent phosphoglycerate mutase from Clostridium tetani (strain Massachusetts / E88).